The chain runs to 1503 residues: MSKLVPIEVTEDRRPTDIKQIQFRLASPEKVMSWSHGEVKKPETINYRTLKPERDGLFCAKIFGPVRDYECLCGKYKKMRYKGVVCEKCGVEVTSTKVRRIRMGHIELVTPVAHIWYVSSLPSRIGTLLGIKMKDLERVLYYEAYIVESGGEAYYDAEAKTPVLKYDVLNEEQYRTLVSRFGELGFKARMGGEVVRDLLDSIDLVDLFTQLKEDIELTKSEAKTKTIAKRLKVIESFLNSGNNPAWMMLTVLPVLPPDLRPLVSLDGGKFAVSDVNDLYRRVINRNQRLKRLVELEAPEIIVRNEKRMLQESVDALFDNGRRANAVKGANKRPLKSLSEIIKGKQGRFRQNLLGKRVDFSGRTVIVVGPSLSMDECGLPKKMALELFKPHLIAKLEDKGYATTVKAAKKMIEDKTNEVWECLAEIVDGYPVLLNRAPTLHKLSIQAFHPKLIDGKAIQLHPLVCAAFNADFDGDQMAVHIPLSSAAIAEAKVLMLASMNILLPASGKAIATPSQDMVLGIYYITLEKNGVKGSNKLFANVDEVRIAIEHDALDIHAKVRTRDDGRIIHTTAGRMLLKAILPNFVPSELWNRVMKKKAINEVVDYVQKHGGIGVTAGFLDRLKNLGFKHATEAGISISIDDIKIPAGKEAKIAESKNRVFEIQKQFEAGLLTEQERYNKIIDVWTDTNNTLATQMMDLVQTDKAGFNSIHMMADSGARGSAAQIRQLAGMRGLMAKPSGEIIETPIISNFKEGLNVVEYFISTHGARKGLADTALKTANAGYLTRKLVDVAQNVKIVEHDCHTHEGIEISDISDQNTLIESLEDRLNGRVLADDVIDPISNEILFAEGTLLDEVSAKVIAEAGIKTAYIRTPTTCKSENGICALCYGVNLATGQIVRRGEAVGIIAAQSIGEPGTQLTLRTFHVGGTASSTAQERQVVAEKEGFIRYYNLKTYVSKEGRNIVANRRNAAVLLVEPKIKAPFSGRVEIQTVHDEVIISVSSKTDTIRYVLRKNEIAKPNELAGVGGQIEGKYYFPYESGAEVQEYESIVETIKDGWNVPSRIPYASEVLVANGAPVTQKIFAKEDGVVKYFLLRGDYLERFEGLKAGYEVIEKGLFATVVDSNNREAVRHYIARGSIIVAEDDAVVDPKTLIAKPKNDESTVIAEWDPYSNPIISETSGTVKFEDIIIGTTATEQYDELTGKTRLMISDHVPAEYKPTIVLASEDGELLRYQVQSKTSIYVEDGAKVKVADIIAKTPKALQKSSDITGGLPRVSELFEGRRPKATALISEIDGVVSFGKSLRGKIRIIVASDNGILKEYFVDKSHTPVVNSGDFVHAGERLTSGIISSHELLRIMGVKTLYNYLVSEVQQVYRSQGVNISDKHIEVIFTQMLRQVKILKSGDTKFIEGDLISKVKFAQENEKIIKLGGRPAIAEPFLVGITRAAVSADSIISAASFQDTTKVLTEAAVSAKVDDLNDLKENVIIGRTIPVGTGIYKDQEIMFGYN.

Positions 71, 73, 86, and 89 each coordinate Zn(2+). Mg(2+) is bound by residues Asp470, Asp472, and Asp474. Zn(2+) is bound by residues Cys800, Cys874, Cys881, and Cys884.

It belongs to the RNA polymerase beta' chain family. The RNAP catalytic core consists of 2 alpha, 1 beta, 1 beta' and 1 omega subunit. When a sigma factor is associated with the core the holoenzyme is formed, which can initiate transcription. Mg(2+) is required as a cofactor. The cofactor is Zn(2+).

The catalysed reaction is RNA(n) + a ribonucleoside 5'-triphosphate = RNA(n+1) + diphosphate. Functionally, DNA-dependent RNA polymerase catalyzes the transcription of DNA into RNA using the four ribonucleoside triphosphates as substrates. The polypeptide is DNA-directed RNA polymerase subunit beta' (Sulfurimonas denitrificans (strain ATCC 33889 / DSM 1251) (Thiomicrospira denitrificans (strain ATCC 33889 / DSM 1251))).